A 269-amino-acid chain; its full sequence is Calretinin (269 aa).

EF-hand domains are found at residues Leu-14 to Ala-49, Ser-61 to Phe-96, Gly-105 to Lys-140, Lys-149 to Phe-184, Leu-193 to Lys-228, and Lys-230 to Ser-265. Residues Asp-27, Asp-29, Asn-31, Tyr-33, Glu-38, Asp-74, Asn-76, Asp-78, Lys-80, Glu-85, Asp-118, Asp-120, Ser-122, Tyr-124, Glu-129, Asp-162, Asn-164, Asp-166, Lys-168, Glu-173, Asp-206, Asp-208, Ser-210, and Glu-217 each coordinate Ca(2+).

It belongs to the calbindin family.

It is found in the synapse. The protein resides in the cell projection. The protein localises to the dendrite. In terms of biological role, calcium-binding protein involved in calcium homeostasis and signal transduction. It plays a critical role in buffering intracellular calcium levels and modulating calcium-dependent signaling pathways. Predominantly expressed in specific neuronal populations, influences synaptic plasticity and neuronal excitability, contributing to learning and memory. During embryonic development, it facilitates neuronal differentiation and maturation. In Gallus gallus (Chicken), this protein is Calretinin (CALB2).